Consider the following 243-residue polypeptide: Probable transcriptional regulatory protein BRE_29 (243 aa).

Belongs to the TACO1 family.

The protein localises to the cytoplasm. This Borrelia recurrentis (strain A1) protein is Probable transcriptional regulatory protein BRE_29.